The primary structure comprises 482 residues: Methylenetetrahydrofolate--tRNA-(uracil-5-)-methyltransferase TrmFO (482 aa).

Position 11–16 (glycine 11–glycine 16) interacts with FAD. A disordered region spans residues leucine 450–glutamate 482.

This sequence belongs to the MnmG family. TrmFO subfamily. FAD serves as cofactor.

Its subcellular location is the cytoplasm. It catalyses the reaction uridine(54) in tRNA + (6R)-5,10-methylene-5,6,7,8-tetrahydrofolate + NADH + H(+) = 5-methyluridine(54) in tRNA + (6S)-5,6,7,8-tetrahydrofolate + NAD(+). The catalysed reaction is uridine(54) in tRNA + (6R)-5,10-methylene-5,6,7,8-tetrahydrofolate + NADPH + H(+) = 5-methyluridine(54) in tRNA + (6S)-5,6,7,8-tetrahydrofolate + NADP(+). Functionally, catalyzes the folate-dependent formation of 5-methyl-uridine at position 54 (M-5-U54) in all tRNAs. This chain is Methylenetetrahydrofolate--tRNA-(uracil-5-)-methyltransferase TrmFO, found in Rhodospirillum rubrum (strain ATCC 11170 / ATH 1.1.1 / DSM 467 / LMG 4362 / NCIMB 8255 / S1).